Consider the following 265-residue polypeptide: Hydroxyethylthiazole kinase 2 (265 aa).

A substrate-binding site is contributed by Met-39. ATP is bound by residues Lys-115 and Thr-168. Position 195 (Gly-195) interacts with substrate.

It belongs to the Thz kinase family. Mg(2+) serves as cofactor.

It carries out the reaction 5-(2-hydroxyethyl)-4-methylthiazole + ATP = 4-methyl-5-(2-phosphooxyethyl)-thiazole + ADP + H(+). The protein operates within cofactor biosynthesis; thiamine diphosphate biosynthesis; 4-methyl-5-(2-phosphoethyl)-thiazole from 5-(2-hydroxyethyl)-4-methylthiazole: step 1/1. In terms of biological role, catalyzes the phosphorylation of the hydroxyl group of 4-methyl-5-beta-hydroxyethylthiazole (THZ). This is Hydroxyethylthiazole kinase 2 from Clostridium botulinum (strain Okra / Type B1).